Reading from the N-terminus, the 363-residue chain is NADH-quinone oxidoreductase subunit H (363 aa).

10 helical membrane-spanning segments follow: residues 29–49 (VLKILLIAVPVIVTVAFYVVW), 62–82 (GPMYVGMGIFQAFADVFKLLF), 96–116 (FIIAPLLTLAPAFAAWSVVPF), 127–147 (VGLLYLLAMTSLGVYGIILAG), 163–183 (AAQVVSYEIAMGFALVGVMIA), 202–222 (FFDWFLIPLFPLFIVYWVSGV), 239–257 (IVAGHMVEYSGGAFALFFL), 264–286 (ILVSFLISIFFLGGWLSPIQGWV), 299–319 (TGGWPWLLMKVFFFASAYIWF), and 339–359 (FIPLTIVWIAVTALMVFYGVI).

The protein belongs to the complex I subunit 1 family. NDH-1 is composed of 14 different subunits. Subunits NuoA, H, J, K, L, M, N constitute the membrane sector of the complex.

It localises to the cell inner membrane. The catalysed reaction is a quinone + NADH + 5 H(+)(in) = a quinol + NAD(+) + 4 H(+)(out). Its function is as follows. NDH-1 shuttles electrons from NADH, via FMN and iron-sulfur (Fe-S) centers, to quinones in the respiratory chain. The immediate electron acceptor for the enzyme in this species is believed to be ubiquinone. Couples the redox reaction to proton translocation (for every two electrons transferred, four hydrogen ions are translocated across the cytoplasmic membrane), and thus conserves the redox energy in a proton gradient. This subunit may bind ubiquinone. The protein is NADH-quinone oxidoreductase subunit H of Xanthomonas campestris pv. campestris (strain 8004).